The following is a 137-amino-acid chain: MLQPKRTKYRKPHRVSYEGKAKGVKEINFGEFGLMALDGAWIDNHQIEAARIAMTRYMKRDGKIWMRIFPHMAMTKKPAEVRMGSGKGNPEKWVAVVKKGTIMFEVAQVNEQVAREALRLAMHKLPIRCKFVKRGEN.

This sequence belongs to the universal ribosomal protein uL16 family. In terms of assembly, part of the 50S ribosomal subunit.

In terms of biological role, binds 23S rRNA and is also seen to make contacts with the A and possibly P site tRNAs. This is Large ribosomal subunit protein uL16 from Mycoplasma mycoides subsp. mycoides SC (strain CCUG 32753 / NCTC 10114 / PG1).